A 270-amino-acid chain; its full sequence is Urease accessory protein UreD (270 aa).

The protein belongs to the UreD family. UreD, UreF and UreG form a complex that acts as a GTP-hydrolysis-dependent molecular chaperone, activating the urease apoprotein by helping to assemble the nickel containing metallocenter of UreC. The UreE protein probably delivers the nickel.

The protein localises to the cytoplasm. Its function is as follows. Required for maturation of urease via the functional incorporation of the urease nickel metallocenter. In Actinobacillus pleuropneumoniae serotype 7 (strain AP76), this protein is Urease accessory protein UreD.